Reading from the N-terminus, the 996-residue chain is Low-density lipoprotein receptor-related protein 8 (996 aa).

Residues 1-28 (MGRPELGALRPLALLLLLLLQLQHLSAA) form the signal peptide. The Extracellular segment spans residues 29–858 (DPLPGGQGPV…GSQMGSTVTA (830 aa)). LDL-receptor class A domains follow at residues 40-76 (ECEE…DDCP), 79-117 (TCAD…ATCS), 120-158 (ECPA…AGCP), 160-196 (LCAP…RGCS), 199-238 (ACPP…ELCG), 250-287 (ACAP…ADCS), 290-326 (PCRE…AGCL), and 330-369 (TCEG…KVCG). 30 disulfide bridges follow: Cys41/Cys53, Cys48/Cys66, Cys60/Cys75, Cys80/Cys92, Cys87/Cys105, Cys99/Cys116, Cys121/Cys135, Cys128/Cys148, Cys142/Cys157, Cys161/Cys173, Cys168/Cys186, Cys180/Cys195, Cys200/Cys213, Cys207/Cys226, Cys220/Cys237, Cys251/Cys264, Cys259/Cys277, Cys271/Cys286, Cys291/Cys303, Cys298/Cys316, Cys310/Cys325, Cys331/Cys344, Cys339/Cys357, Cys351/Cys368, Cys373/Cys384, Cys380/Cys393, Cys395/Cys407, Cys413/Cys423, Cys419/Cys432, and Cys434/Cys447. Residues Trp58, Asp61, Asp63, Asp65, Asp71, and Glu72 each coordinate Ca(2+). N-linked (GlcNAc...) asparagine glycosylation is present at Asn170. The EGF-like 1 domain occupies 364-408 (PQKVCGLNECLHNNGGCSHICTDLKIGFECTCPAGFQLLDQKTCG). Residues 409-448 (DIDECQDPDACSQICVNYKGYFKCECHPGYEMDTLTKNCK) enclose the EGF-like 2; calcium-binding domain. LDL-receptor class B repeat units follow at residues 495-541 (NRIY…DWVH), 542-584 (KHIY…DPLR), 585-628 (GFMY…DLLS), 629-671 (QRLY…AVFE), and 672-714 (DKVF…FHEL). The N-linked (GlcNAc...) asparagine glycan is linked to Asn551. The interval 773 to 831 (STSTTTLASAMTRTVPATTRAPGTTIHDPTYQNHSTETPSQTAAAPHSVNVPRAPSTSP) is clustered O-linked oligosaccharides. The segment at 778–851 (TLASAMTRTV…SQHYGNEGSQ (74 aa)) is disordered. Over residues 802–815 (TYQNHSTETPSQTA) the composition is skewed to polar residues. An N-linked (GlcNAc...) asparagine glycan is attached at Asn805. Positions 824 to 839 (PRAPSTSPSTPSPATS) are enriched in low complexity. N-linked (GlcNAc...) asparagine glycosylation occurs at Asn840. The span at 840 to 851 (NHSQHYGNEGSQ) shows a compositional bias: polar residues. The chain crosses the membrane as a helical span at residues 859–881 (AVIGVIVPIVVIALLCMSGYLIW). At 882 to 996 (RNWKRKNTKS…ALSLEDDGLP (115 aa)) the chain is on the cytoplasmic side.

Belongs to the LDLR family. In terms of assembly, homooligomer. Interacts with VLDLR. Reelin associates with two or more receptor molecules. Interacts with DAB1 and JNK-interacting proteins. Interacts with SNX17. Interacts with PCSK9. Interacts with MDK; this interaction is calcium dependent. Interacts with CLU. O-glycosylated. Some alternatively spliced isoforms lack the O-linked sugar domain. Post-translationally, undergoes sequential, furin and gamma-secretase dependent, proteolytic processing, resulting in the extracellular release of the entire ligand-binding domain as a soluble polypeptide and in the intracellular domain (ICD) release into the cytoplasm. The gamma-secretase-dependent proteolytical processing occurs after the bulk of the extracellular domain has been shed, in a furin-dependent manner, in alternatively spliced isoforms carrying the furin cleavage site. Hypoglycosylation (mainly hypo-O-glycosylation) leads to increased extracellular cleavage, which in turn results in accelerating release of the intracellular domain (ICD) by the gamma-secretase. The resulting receptor fragment is able to inhibit Reelin signaling and in particular the Reelin-induced DAB1 phosphorylation. In terms of processing, tyrosine phosphorylated upon apoE binding. Ubiquitinated by MYLIP leading to degradation. Expressed in neurons throughout the brain, with strong expression in pyramidal neurons of the hippocampus, granule cells of the dentate gyrus, cortical neurons and Purkinje cells of the cerebellum. Also expressed in the epithelium of the choroid plexus and of the blood vessels (apical expression), as well as in the epididymis.

Its subcellular location is the cell membrane. The protein localises to the secreted. In terms of biological role, cell surface receptor for Reelin (RELN) and apolipoprotein E (apoE)-containing ligands. LRP8 participates in transmitting the extracellular Reelin signal to intracellular signaling processes, by binding to DAB1 on its cytoplasmic tail. Reelin acts via both the VLDL receptor (VLDLR) and LRP8 to regulate DAB1 tyrosine phosphorylation and microtubule function in neurons. LRP8 has higher affinity for Reelin than VLDLR. LRP8 is thus a key component of the Reelin pathway which governs neuronal layering of the forebrain during embryonic brain development. Binds the endoplasmic reticulum resident receptor-associated protein (RAP). Binds dimers of beta 2-glycoprotein I and may be involved in the suppression of platelet aggregation in the vasculature. Highly expressed in the initial segment of the epididymis, where it affects the functional expression of clusterin and phospholipid hydroperoxide glutathione peroxidase (PHGPx), two proteins required for sperm maturation. May also function as an endocytic receptor. Not required for endocytic uptake of SEPP1 in the kidney which is mediated by LRP2. Together with its ligand, apolipoprotein E (apoE), may indirectly play a role in the suppression of the innate immune response by controlling the survival of myeloid-derived suppressor cells. The sequence is that of Low-density lipoprotein receptor-related protein 8 (Lrp8) from Mus musculus (Mouse).